A 346-amino-acid polypeptide reads, in one-letter code: Uroporphyrinogen decarboxylase (346 aa).

Substrate contacts are provided by residues 23–27, D72, Y149, T204, and H318; that span reads RQAGR.

The protein belongs to the uroporphyrinogen decarboxylase family. In terms of assembly, homodimer.

The protein localises to the cytoplasm. It carries out the reaction uroporphyrinogen III + 4 H(+) = coproporphyrinogen III + 4 CO2. It functions in the pathway porphyrin-containing compound metabolism; protoporphyrin-IX biosynthesis; coproporphyrinogen-III from 5-aminolevulinate: step 4/4. Its function is as follows. Catalyzes the decarboxylation of four acetate groups of uroporphyrinogen-III to yield coproporphyrinogen-III. This chain is Uroporphyrinogen decarboxylase, found in Synechococcus sp. (strain JA-2-3B'a(2-13)) (Cyanobacteria bacterium Yellowstone B-Prime).